We begin with the raw amino-acid sequence, 279 residues long: Energy-coupling factor transporter ATP-binding protein EcfA1 (279 aa).

Residues 8–240 (IKFENVSFSY…KQFLRDINLD (233 aa)) form the ABC transporter domain. Position 41–48 (41–48 (GHNGSGKS)) interacts with ATP.

Belongs to the ABC transporter superfamily. Energy-coupling factor EcfA family. Forms a stable energy-coupling factor (ECF) transporter complex composed of 2 membrane-embedded substrate-binding proteins (S component), 2 ATP-binding proteins (A component) and 2 transmembrane proteins (T component).

The protein resides in the cell membrane. ATP-binding (A) component of a common energy-coupling factor (ECF) ABC-transporter complex. Unlike classic ABC transporters this ECF transporter provides the energy necessary to transport a number of different substrates. The chain is Energy-coupling factor transporter ATP-binding protein EcfA1 from Mycoplasmoides gallisepticum (strain R(low / passage 15 / clone 2)) (Mycoplasma gallisepticum).